We begin with the raw amino-acid sequence, 159 residues long: Probable metallophosphoesterase MPN_126 (159 aa).

The Mn(2+) site is built by Asp9, His11, Asp34, Asn53, His75, His107, and His109.

Belongs to the metallophosphoesterase superfamily. YfcE family. Requires Mn(2+) as cofactor.

This is Probable metallophosphoesterase MPN_126 from Mycoplasma pneumoniae (strain ATCC 29342 / M129 / Subtype 1) (Mycoplasmoides pneumoniae).